The chain runs to 726 residues: Putative tyrosine-protein kinase AmsA (726 aa).

2 helical membrane-spanning segments follow: residues 32–52 (WMIV…SLFA) and 425–445 (ILIV…LVLM).

Belongs to the etk/wzc family.

The protein localises to the cell inner membrane. It carries out the reaction L-tyrosyl-[protein] + ATP = O-phospho-L-tyrosyl-[protein] + ADP + H(+). Its pathway is glycan metabolism; exopolysaccharide biosynthesis. In terms of biological role, involved in the biosynthesis of amylovoran which functions as a virulence factor. The protein is Putative tyrosine-protein kinase AmsA (amsA) of Erwinia amylovora (Fire blight bacteria).